A 272-amino-acid polypeptide reads, in one-letter code: L-aminoadipate-semialdehyde dehydrogenase-phosphopantetheinyl transferase (272 aa).

Belongs to the P-Pant transferase superfamily. AcpS family.

It carries out the reaction apo-[ACP] + CoA = holo-[ACP] + adenosine 3',5'-bisphosphate + H(+). Its function is as follows. Catalyzes the transfer of a 4'-phosphopantetheine moiety from coenzyme A to a serine residue of acceptor proteins, such as alpha-aminoadipate reductase. Necessary for alpha-aminoadipate reductase activity. The polypeptide is L-aminoadipate-semialdehyde dehydrogenase-phosphopantetheinyl transferase (Saccharomyces cerevisiae (strain ATCC 204508 / S288c) (Baker's yeast)).